A 299-amino-acid chain; its full sequence is dTDP-4-dehydrorhamnose reductase (299 aa).

NADH is bound by residues 10–12 (GQV), Asp30, 39–40 (DF), and 63–65 (AHT). 11–12 (QV) lines the NADPH pocket. Residues 39–40 (DF), 63–65 (AHT), and Tyr102 contribute to the NADPH site. 104 to 105 (TD) lines the dTDP-beta-L-rhamnose pocket. Residues Tyr128 and Lys132 each coordinate NADH. NADPH-binding residues include Tyr128 and Lys132. The Proton donor/acceptor role is filled by Tyr128. DTDP-beta-L-rhamnose is bound at residue Trp153.

This sequence belongs to the dTDP-4-dehydrorhamnose reductase family. In terms of assembly, homodimer. Requires Mg(2+) as cofactor.

It catalyses the reaction dTDP-beta-L-rhamnose + NADP(+) = dTDP-4-dehydro-beta-L-rhamnose + NADPH + H(+). It participates in carbohydrate biosynthesis; dTDP-L-rhamnose biosynthesis. Its pathway is bacterial outer membrane biogenesis; LPS O-antigen biosynthesis. Involved in the biosynthesis of the dTDP-L-rhamnose which is an important component of lipopolysaccharide (LPS). Catalyzes the reduction of dTDP-6-deoxy-L-lyxo-4-hexulose to yield dTDP-L-rhamnose. RmlD uses NADH and NADPH nearly equally well. This is dTDP-4-dehydrorhamnose reductase (rfbD) from Salmonella typhimurium (strain LT2 / SGSC1412 / ATCC 700720).